The primary structure comprises 321 residues: tRNA U34 carboxymethyltransferase (321 aa).

Carboxy-S-adenosyl-L-methionine is bound by residues Lys90, Trp104, Lys109, Gly129, 151–153 (DPT), 180–181 (IE), Met195, Tyr199, and Arg314.

This sequence belongs to the class I-like SAM-binding methyltransferase superfamily. CmoB family. Homotetramer.

It carries out the reaction carboxy-S-adenosyl-L-methionine + 5-hydroxyuridine(34) in tRNA = 5-carboxymethoxyuridine(34) in tRNA + S-adenosyl-L-homocysteine + H(+). Its function is as follows. Catalyzes carboxymethyl transfer from carboxy-S-adenosyl-L-methionine (Cx-SAM) to 5-hydroxyuridine (ho5U) to form 5-carboxymethoxyuridine (cmo5U) at position 34 in tRNAs. This chain is tRNA U34 carboxymethyltransferase, found in Mannheimia succiniciproducens (strain KCTC 0769BP / MBEL55E).